Here is a 505-residue protein sequence, read N- to C-terminus: Zinc finger protein 649 (505 aa).

The KRAB domain occupies 8–79 (LTLEDVAVDF…EDEIHSPAHP (72 aa)). Lys-112 is covalently cross-linked (Glycyl lysine isopeptide (Lys-Gly) (interchain with G-Cter in SUMO2)). 10 C2H2-type zinc fingers span residues 178–200 (HECT…KRIH), 206–228 (HVCS…ERAH), 234–256 (HGCS…ERAH), 262–284 (YGCS…QRIH), 290–312 (HQCS…QRTH), 318–340 (HTCS…QRTH), 346–368 (YGCI…QRYH), 374–396 (FVCP…QKIH), 402–424 (YKCS…HRTH), and 430–452 (YGCD…KRIH). The tract at residues 455 to 481 (EKRGDSVKVENPSTASHSLSPSEHVQG) is disordered. Positions 465–477 (NPSTASHSLSPSE) are enriched in polar residues.

It belongs to the krueppel C2H2-type zinc-finger protein family. In terms of tissue distribution, highly expressed in heart, skeletal muscle, and brain. Lower expression in liver, lung, kidney, pancreas and placenta.

Its subcellular location is the nucleus. In terms of biological role, transcriptional repressor. Regulator of transcriptional factor complexes and may suppress SRE and AP-1 transcription activities mediated by growth factor signaling pathways. In Homo sapiens (Human), this protein is Zinc finger protein 649 (ZNF649).